Reading from the N-terminus, the 316-residue chain is PDZ and LIM domain protein 3 (316 aa).

The 84-residue stretch at 1-84 (MPQNVVLPGP…QLCLKIDRAE (84 aa)) folds into the PDZ domain. Ser18 and Ser93 each carry phosphoserine. Arg164 bears the Omega-N-methylarginine mark. An LIM zinc-binding domain is found at 244–303 (PLCDKCGSGIVGAVVKARDKYRHPECFVCADCNLNLKQKGYFFVEGELYCETHARARTRP).

Interacts with ACTN2. Forms a heterodimer with PDLIM4 (via LIM domain).

The protein localises to the cytoplasm. It is found in the myofibril. The protein resides in the sarcomere. Its subcellular location is the z line. Functionally, may play a role in the organization of actin filament arrays within muscle cells. The polypeptide is PDZ and LIM domain protein 3 (Pdlim3) (Mus musculus (Mouse)).